The following is a 1589-amino-acid chain: Pentafunctional AROM polypeptide (1589 aa).

A 3-dehydroquinate synthase region spans residues 1 to 384; the sequence is MAAPTTIKIL…HEQQASVVSN (384 aa). Residues 44–46, 81–84, 114–116, and aspartate 119 contribute to the NAD(+) site; these read DTT, ELSK, and GGV. Arginine 130 serves as a coordination point for 7-phospho-2-dehydro-3-deoxy-D-arabino-heptonate. NAD(+) is bound at residue 139–140; sequence TT. 7-phospho-2-dehydro-3-deoxy-D-arabino-heptonate-binding residues include aspartate 146 and lysine 152. Residue lysine 161 coordinates NAD(+). Position 162 (asparagine 162) interacts with 7-phospho-2-dehydro-3-deoxy-D-arabino-heptonate. NAD(+)-binding positions include 179 to 182 and asparagine 190; that span reads FLNT. Glutamate 194 provides a ligand contact to Zn(2+). Residues 194–197 and lysine 250 contribute to the 7-phospho-2-dehydro-3-deoxy-D-arabino-heptonate site; that span reads EVIK. The active-site Proton acceptor; for 3-dehydroquinate synthase activity is the glutamate 260. 7-phospho-2-dehydro-3-deoxy-D-arabino-heptonate contacts are provided by residues 264-268 and histidine 271; that span reads RNLLN. A Zn(2+)-binding site is contributed by histidine 271. Histidine 275 serves as the catalytic Proton acceptor; for 3-dehydroquinate synthase activity. The 7-phospho-2-dehydro-3-deoxy-D-arabino-heptonate site is built by histidine 287 and lysine 356. Zn(2+) is bound at residue histidine 287. Residues 397–841 are EPSP synthase; it reads VSPGVPKSLQ…WDTLAQLFKA (445 aa). Cysteine 823 serves as the catalytic For EPSP synthase activity. The segment at 861–1052 is shikimate kinase; the sequence is ASIFIIGMRG…KKKPQSFFVS (192 aa). 867-874 contacts ATP; sequence GMRGAGKT. The interval 1053-1273 is 3-dehydroquinase; the sequence is LTLPDLRPSA…AAPGQLSAQD (221 aa). Histidine 1176 acts as the Proton acceptor; for 3-dehydroquinate dehydratase activity in catalysis. Lysine 1204 serves as the catalytic Schiff-base intermediate with substrate; for 3-dehydroquinate dehydratase activity. Residues 1286–1589 are shikimate dehydrogenase; sequence PRKFAIFGKP…VMNPGTDNRG (304 aa).

In the N-terminal section; belongs to the sugar phosphate cyclases superfamily. Dehydroquinate synthase family. This sequence in the 2nd section; belongs to the EPSP synthase family. The protein in the 3rd section; belongs to the shikimate kinase family. It in the 4th section; belongs to the type-I 3-dehydroquinase family. In the C-terminal section; belongs to the shikimate dehydrogenase family. Homodimer. It depends on Zn(2+) as a cofactor.

It localises to the cytoplasm. The catalysed reaction is 7-phospho-2-dehydro-3-deoxy-D-arabino-heptonate = 3-dehydroquinate + phosphate. It catalyses the reaction 3-dehydroquinate = 3-dehydroshikimate + H2O. It carries out the reaction shikimate + NADP(+) = 3-dehydroshikimate + NADPH + H(+). The enzyme catalyses shikimate + ATP = 3-phosphoshikimate + ADP + H(+). The catalysed reaction is 3-phosphoshikimate + phosphoenolpyruvate = 5-O-(1-carboxyvinyl)-3-phosphoshikimate + phosphate. Its pathway is metabolic intermediate biosynthesis; chorismate biosynthesis; chorismate from D-erythrose 4-phosphate and phosphoenolpyruvate: step 2/7. It participates in metabolic intermediate biosynthesis; chorismate biosynthesis; chorismate from D-erythrose 4-phosphate and phosphoenolpyruvate: step 3/7. It functions in the pathway metabolic intermediate biosynthesis; chorismate biosynthesis; chorismate from D-erythrose 4-phosphate and phosphoenolpyruvate: step 4/7. The protein operates within metabolic intermediate biosynthesis; chorismate biosynthesis; chorismate from D-erythrose 4-phosphate and phosphoenolpyruvate: step 5/7. Its pathway is metabolic intermediate biosynthesis; chorismate biosynthesis; chorismate from D-erythrose 4-phosphate and phosphoenolpyruvate: step 6/7. In terms of biological role, the AROM polypeptide catalyzes 5 consecutive enzymatic reactions in prechorismate polyaromatic amino acid biosynthesis. In Coccidioides posadasii (strain C735) (Valley fever fungus), this protein is Pentafunctional AROM polypeptide.